The primary structure comprises 227 residues: 7-cyano-7-deazaguanine synthase (227 aa).

Residue 7–17 (LSGGLDSSTIL) coordinates ATP. Zn(2+) contacts are provided by cysteine 191, cysteine 199, cysteine 202, and cysteine 205.

This sequence belongs to the QueC family. It depends on Zn(2+) as a cofactor.

It carries out the reaction 7-carboxy-7-deazaguanine + NH4(+) + ATP = 7-cyano-7-deazaguanine + ADP + phosphate + H2O + H(+). It participates in purine metabolism; 7-cyano-7-deazaguanine biosynthesis. Functionally, catalyzes the ATP-dependent conversion of 7-carboxy-7-deazaguanine (CDG) to 7-cyano-7-deazaguanine (preQ(0)). This chain is 7-cyano-7-deazaguanine synthase, found in Trichormus variabilis (strain ATCC 29413 / PCC 7937) (Anabaena variabilis).